The primary structure comprises 259 residues: Ribosomal RNA small subunit methyltransferase A (259 aa).

The S-adenosyl-L-methionine site is built by Asn13, Leu15, Gly40, Glu61, Asp85, and Asn103.

Belongs to the class I-like SAM-binding methyltransferase superfamily. rRNA adenine N(6)-methyltransferase family. RsmA subfamily.

It localises to the cytoplasm. It catalyses the reaction adenosine(1518)/adenosine(1519) in 16S rRNA + 4 S-adenosyl-L-methionine = N(6)-dimethyladenosine(1518)/N(6)-dimethyladenosine(1519) in 16S rRNA + 4 S-adenosyl-L-homocysteine + 4 H(+). Functionally, specifically dimethylates two adjacent adenosines (A1518 and A1519) in the loop of a conserved hairpin near the 3'-end of 16S rRNA in the 30S particle. May play a critical role in biogenesis of 30S subunits. The protein is Ribosomal RNA small subunit methyltransferase A of Neisseria gonorrhoeae (strain ATCC 700825 / FA 1090).